Consider the following 102-residue polypeptide: MAKGQSLQDPFLNALRRERVPVSIYLVNGIKLQGQIESFDQFVILLKNTVSQMVYKHAISTVVPSRPVSHHSNNAGGGTSSNYHHGSSAQGTSAQQDSEETE.

The Sm domain occupies 9–68 (DPFLNALRRERVPVSIYLVNGIKLQGQIESFDQFVILLKNTVSQMVYKHAISTVVPSRPV). Residues 63 to 102 (VPSRPVSHHSNNAGGGTSSNYHHGSSAQGTSAQQDSEETE) form a disordered region. The span at 70-96 (HHSNNAGGGTSSNYHHGSSAQGTSAQQ) shows a compositional bias: polar residues.

Belongs to the Hfq family. In terms of assembly, homohexamer.

RNA chaperone that binds small regulatory RNA (sRNAs) and mRNAs to facilitate mRNA translational regulation in response to envelope stress, environmental stress and changes in metabolite concentrations. Also binds with high specificity to tRNAs. This is RNA-binding protein Hfq from Citrobacter koseri (strain ATCC BAA-895 / CDC 4225-83 / SGSC4696).